The chain runs to 1247 residues: Protein jagged-2 (1247 aa).

Residues 1–23 (MRARGWGRLPRRLLLLLVLCVQA) form the signal peptide. The Extracellular segment spans residues 24–1082 (TRPMGYFELQ…ETVVMGGSST (1059 aa)). N-linked (GlcNAc...) asparagine glycosylation is present at N153. Residues 196 to 240 (VRCDENYYSATCNKFCRPRNDFFGHYTCDQYGNKACMDGWMGKEC) form the DSL domain. 42 cysteine pairs are disulfide-bonded: C198/C207, C211/C223, C231/C240, C245/C256, C249/C262, C264/C273, C276/C287, C282/C293, C295/C304, C311/C323, C317/C333, C335/C344, C351/C362, C356/C371, C373/C382, C389/C400, C394/C409, C411/C420, C427/C438, C432/C447, C449/C458, C465/C475, C469/C484, C486/C495, C502/C513, C507/C522, C524/C533, C540/C551, C545/C560, C562/C571, C589/C612, C606/C622, C624/C633, C640/C651, C645/C660, C662/C671, C678/C689, C683/C698, C700/C709, C716/C727, C721/C736, and C738/C747. The 34-residue stretch at 241-274 (KEAVCKQGCNLLHGGCTVPGECRCSYGWQGKFCD) folds into the EGF-like 1 domain. One can recognise an EGF-like 2; atypical domain in the interval 275 to 305 (ECVPYPGCVHGSCVEPWHCDCETNWGGLLCD). EGF-like domains are found at residues 307–345 (DLNY…KNCE) and 347–383 (AEHA…PTCA). Positions 385-421 (DIDECASNPCAAGGTCVDQVDGFECICPEQWVGATCQ) constitute an EGF-like 5; calcium-binding domain. One can recognise an EGF-like 6; calcium-binding domain in the interval 423-459 (DANECEGKPCLNAFSCKNLIGGYYCDCLPGWKGINCQ). The region spanning 461–496 (NINDCHGQCQHGGTCKDLVNGYQCVCPRGFGGRHCE) is the EGF-like 7; calcium-binding domain. EGF-like domains lie at 498-534 (EYDK…LHCE) and 536-572 (DMDL…KNCS). N570 carries N-linked (GlcNAc...) asparagine glycosylation. The EGF-like 10; atypical domain maps to 574-634 (PRDTCPGGAC…DSGFTGTYCH (61 aa)). An N-linked (GlcNAc...) asparagine glycan is attached at N619. Residues 636-672 (NIDDCMGQPCRNGGTCIDEVDSFRCFCPSGWEGELCD) enclose the EGF-like 11; calcium-binding domain. Residues 674-710 (NPNDCLPDPCHSRGRCYDLVNDFYCACDDGWKGKTCH) enclose the EGF-like 12; calcium-binding domain. 2 consecutive EGF-like domains span residues 712–748 (REFQ…STCT) and 751–787 (KNSS…RTCT). N-linked (GlcNAc...) asparagine glycosylation occurs at N752. 9 disulfide bridges follow: C755/C766, C760/C775, C777/C786, C793/C804, C798/C813, C815/C824, C831/C842, C836/C851, and C853/C862. Residues 789 to 825 (NTNDCNPLPCYNGGICVDGVNWFRCECAPGFAGPDCR) form the EGF-like 15; calcium-binding domain. The 37-residue stretch at 827–863 (NIDECQSSPCAYGATCVDEINGYRCSCPPGRSGPRCQ) folds into the EGF-like 16; calcium-binding domain. N1060 carries an N-linked (GlcNAc...) asparagine glycan. A helical transmembrane segment spans residues 1083-1103 (GLLVPVLCSVFSVLWLACVVI). At 1104–1247 (CVWWTRKRRK…TKDVRRAGRE (144 aa)) the chain is on the cytoplasmic side. 3 stretches are compositionally biased toward basic and acidic residues: residues 1115–1125 (RERSRLPRDES), 1192–1212 (LSRG…KFTK), and 1230–1247 (VDNR…AGRE). Disordered regions lie at residues 1115–1148 (RERS…GSGL) and 1167–1247 (PRRA…AGRE). S1125 carries the post-translational modification Phosphoserine.

In terms of tissue distribution, found to be highest in fetal thymus, epidermis, foregut dorsal root ganglia and inner ear. In 2-weeK-old mice, abundant in heart, lung, thymus, skeletal muscle, brain and testis. Expression overlaps partially with Notch1 expression.

The protein resides in the membrane. Its function is as follows. Putative Notch ligand involved in the mediation of Notch signaling. Plays an essential role during limb, craniofacial and thymic development. May be involved in myogenesis and in the development of peripheral and central nervous systems. This chain is Protein jagged-2 (Jag2), found in Mus musculus (Mouse).